We begin with the raw amino-acid sequence, 268 residues long: Orotidine 5'-phosphate decarboxylase (268 aa).

Substrate is bound by residues Asp38, 60–62, 92–101, Tyr218, and Arg236; these read KTH and DRKFADIGNT. Lys94 functions as the Proton donor in the catalytic mechanism.

The protein belongs to the OMP decarboxylase family.

It catalyses the reaction orotidine 5'-phosphate + H(+) = UMP + CO2. The protein operates within pyrimidine metabolism; UMP biosynthesis via de novo pathway; UMP from orotate: step 2/2. This chain is Orotidine 5'-phosphate decarboxylase (URA3), found in Candida tropicalis (Yeast).